Reading from the N-terminus, the 249-residue chain is MADS-box transcription factor 7 (249 aa).

An MADS-box domain is found at 1-61 (MGRGRVELKR…GKLYEFCSTQ (61 aa)). Residues 90–180 (LKASRNEYLK…RRKLEESNHV (91 aa)) enclose the K-box domain.

May interact with the K-box of MADS6. May interact with MADS13 and MADS18. Expressed in lodicules, stamens and carpels.

Its subcellular location is the nucleus. Its function is as follows. Probable transcription factor. May be involved in the control of flowering time. This chain is MADS-box transcription factor 7 (MADS7), found in Oryza sativa subsp. japonica (Rice).